The following is a 469-amino-acid chain: ATP synthase subunit beta (469 aa).

155 to 162 (GGAGVGKT) provides a ligand contact to ATP.

It belongs to the ATPase alpha/beta chains family. In terms of assembly, F-type ATPases have 2 components, CF(1) - the catalytic core - and CF(0) - the membrane proton channel. CF(1) has five subunits: alpha(3), beta(3), gamma(1), delta(1), epsilon(1). CF(0) has three main subunits: a(1), b(2) and c(9-12). The alpha and beta chains form an alternating ring which encloses part of the gamma chain. CF(1) is attached to CF(0) by a central stalk formed by the gamma and epsilon chains, while a peripheral stalk is formed by the delta and b chains.

Its subcellular location is the cell inner membrane. It carries out the reaction ATP + H2O + 4 H(+)(in) = ADP + phosphate + 5 H(+)(out). Its function is as follows. Produces ATP from ADP in the presence of a proton gradient across the membrane. The catalytic sites are hosted primarily by the beta subunits. This chain is ATP synthase subunit beta, found in Helicobacter pylori (strain P12).